The chain runs to 346 residues: Methylthioribose-1-phosphate isomerase (346 aa).

Substrate contacts are provided by residues 44 to 46 (RGA), Arg-87, and Gln-194. Asp-235 acts as the Proton donor in catalysis. 245 to 246 (NK) serves as a coordination point for substrate.

The protein belongs to the eIF-2B alpha/beta/delta subunits family. MtnA subfamily.

The catalysed reaction is 5-(methylsulfanyl)-alpha-D-ribose 1-phosphate = 5-(methylsulfanyl)-D-ribulose 1-phosphate. It functions in the pathway amino-acid biosynthesis; L-methionine biosynthesis via salvage pathway; L-methionine from S-methyl-5-thio-alpha-D-ribose 1-phosphate: step 1/6. Its function is as follows. Catalyzes the interconversion of methylthioribose-1-phosphate (MTR-1-P) into methylthioribulose-1-phosphate (MTRu-1-P). The sequence is that of Methylthioribose-1-phosphate isomerase from Desulforamulus reducens (strain ATCC BAA-1160 / DSM 100696 / MI-1) (Desulfotomaculum reducens).